The primary structure comprises 149 residues: GATA transcription factor 15 (149 aa).

The span at 1–10 shows a compositional bias: basic and acidic residues; it reads MLDPTEKVID. 2 disordered regions span residues 1–41 and 76–102; these read MLDP…NEKK and RRTL…GDSL. A GATA-type zinc finger spans residues 37 to 91; sequence SNEKKSCAICGTSKTPLWRGGPAGPKSLCNACGIRNRKKRRTLISNRSEDKKKKS.

This sequence belongs to the type IV zinc-finger family. Class B subfamily.

It is found in the nucleus. In terms of biological role, transcriptional regulator that specifically binds 5'-GATA-3' or 5'-GAT-3' motifs within gene promoters. This Arabidopsis thaliana (Mouse-ear cress) protein is GATA transcription factor 15 (GATA15).